The primary structure comprises 162 residues: Probable tRNA (guanine(10)-N2)-dimethyltransferase (162 aa).

The protein belongs to the methyltransferase superfamily. Trm-G10 family. As to quaternary structure, monomer.

The protein localises to the cytoplasm. The enzyme catalyses guanosine(10) in tRNA + 2 S-adenosyl-L-methionine = N(2)-dimethylguanosine(10) in tRNA + 2 S-adenosyl-L-homocysteine + 2 H(+). Its function is as follows. Catalyzes the adenosylmethionine-dependent methylation of the exocyclic amino group (N(2)) of guanosine at position 10 of various tRNAs. Acts via a two-step process that leads to the formation of either N(2)-monomethyl (m(2)G) or N(2)-dimethylguanosine (m(2)(2)G). The chain is Probable tRNA (guanine(10)-N2)-dimethyltransferase (trmG10) from Methanothermococcus thermolithotrophicus (Methanococcus thermolithotrophicus).